The primary structure comprises 496 residues: Protein RepS (496 aa).

Residues 120–141 (SDILTTAIDLGFMPTLIIKSDK) mediate DNA binding.

Essential for replication. The chain is Protein RepS (repS) from Streptococcus pyogenes.